The chain runs to 201 residues: NAD(P)H dehydrogenase (quinone) (201 aa).

The Flavodoxin-like domain maps to 4-192; it reads VLVLYYSSYG…TIARFQGQHI (189 aa). FMN contacts are provided by residues 10–15 and 80–82; these read SSYGHV and TRF. Y12 contributes to the NAD(+) binding site. A substrate-binding site is contributed by W100. Residues 115 to 121 and H136 each bind FMN; that span reads STASQHG.

The protein belongs to the WrbA family. It depends on FMN as a cofactor.

It carries out the reaction a quinone + NADH + H(+) = a quinol + NAD(+). The catalysed reaction is a quinone + NADPH + H(+) = a quinol + NADP(+). The chain is NAD(P)H dehydrogenase (quinone) from Chromohalobacter salexigens (strain ATCC BAA-138 / DSM 3043 / CIP 106854 / NCIMB 13768 / 1H11).